The sequence spans 734 residues: Predicted GPI-anchored protein 49 (734 aa).

An N-terminal signal peptide occupies residues 1–16 (MNYITSLLLLSSNTFL). Residues asparagine 27, asparagine 56, asparagine 68, and asparagine 71 are each glycosylated (N-linked (GlcNAc...) asparagine). The disordered stretch occupies residues 78–145 (DNSDTDIDDS…NESDTQNEND (68 aa)). The segment covering 87–98 (SSSNSEDVSSND) has biased composition (low complexity). Residues asparagine 105, asparagine 118, asparagine 136, and asparagine 180 are each glycosylated (N-linked (GlcNAc...) asparagine). Residues 110–129 (FSDESDEGNDSDDNGDEVEN) are compositionally biased toward acidic residues. A compositionally biased stretch (polar residues) spans 130–141 (MENNQANESDTQ). Disordered stretches follow at residues 216–262 (SPKS…LKSK) and 331–360 (DANPTEEYDSGDGKENTQQNPIPEKMRLPT). Residues 228–259 (SRKKTLKSKSKSKSSKLKHKSRKSHKRRPKLL) are compositionally biased toward basic residues. Residues asparagine 388 and asparagine 427 are each glycosylated (N-linked (GlcNAc...) asparagine). A disordered region spans residues 447–479 (PPRYSNHHSEFTVERPPRPSRTKKRPRIKAKKT). Residues 453–463 (HHSEFTVERPP) show a composition bias toward basic and acidic residues. A compositionally biased stretch (basic residues) spans 464-479 (RPSRTKKRPRIKAKKT). A glycan (N-linked (GlcNAc...) asparagine) is linked at asparagine 517. Residues 582 to 653 (KPQETKLHSP…STTSTKPNDQ (72 aa)) form a disordered region. The segment covering 592 to 611 (TSTDTKSSKLMSSSSSNNNK) has biased composition (low complexity). Positions 620-631 (EYNQTQESTSYN) are enriched in polar residues. Asparagine 622 and asparagine 631 each carry an N-linked (GlcNAc...) asparagine glycan. Residues 632–650 (TTKAVPKTSVVSSTTSTKP) show a composition bias toward low complexity. A lipid anchor (GPI-anchor amidated serine) is attached at serine 707. Positions 708 to 734 (ASQNLSFSVLGLIILLLLLPGLLIIIM) are cleaved as a propeptide — removed in mature form. Residue asparagine 711 is glycosylated (N-linked (GlcNAc...) asparagine).

It localises to the cell membrane. The sequence is that of Predicted GPI-anchored protein 49 (PGA49) from Candida albicans (strain SC5314 / ATCC MYA-2876) (Yeast).